Consider the following 196-residue polypeptide: ECF RNA polymerase sigma factor SigM (196 aa).

Residues 39–105 (LFRRHHRQLH…ACLDRLRRAK (67 aa)) are sigma-70 factor domain-2. Positions 63–66 (DALQ) match the Polymerase core binding motif. The tract at residues 130–181 (AVQRALMRLPVEQRAAVVAVDMQGYSIADTARMLGVAEGTVKSRCARARARL) is sigma-70 factor domain-4. Residues 156–175 (IADTARMLGVAEGTVKSRCA) constitute a DNA-binding region (H-T-H motif).

This sequence belongs to the sigma-70 factor family. ECF subfamily. Interacts transiently with the RNA polymerase catalytic core formed by RpoA, RpoB, RpoC and RpoZ (2 alpha, 1 beta, 1 beta' and 1 omega subunit) to form the RNA polymerase holoenzyme that can initiate transcription. Interacts (via sigma-70 factor domain-4) with anti-sigma-M factor RsmA (AC L7N5D7).

Sigma factors are initiation factors that promote the attachment of RNA polymerase to specific initiation sites and are then released. Extracytoplasmic function (ECF) sigma factors are held in an inactive form by an anti-sigma factor (RsaM, AC L7N5D7) until released by regulated intramembrane proteolysis. This sigma factor is required for the synthesis of surface or secreted molecules. This Mycobacterium tuberculosis (strain ATCC 25618 / H37Rv) protein is ECF RNA polymerase sigma factor SigM (sigM).